The sequence spans 373 residues: 3 beta-hydroxysteroid dehydrogenase/Delta 5--&gt;4-isomerase type 1 (373 aa).

NADP(+) contacts are provided by residues 10–15 (GAGGFL), Tyr155, and Lys159. Lys159 serves as the catalytic Proton donor. Residues 288-308 (LALMYWIGFLLEVVSFLLSPV) traverse the membrane as a helical segment.

This sequence belongs to the 3-beta-HSD family. In terms of tissue distribution, adrenal glands, testes and ovaries.

Its subcellular location is the endoplasmic reticulum membrane. It is found in the mitochondrion membrane. It carries out the reaction a 3beta-hydroxy-Delta(5)-steroid + NAD(+) = a 3-oxo-Delta(5)-steroid + NADH + H(+). The catalysed reaction is pregnenolone + NAD(+) = pregn-5-ene-3,20-dione + NADH + H(+). It catalyses the reaction 3beta-hydroxyandrost-5-en-17-one + NAD(+) = androst-5-ene-3,17-dione + NADH + H(+). The enzyme catalyses androst-5-en-3beta,17beta-diol + NAD(+) = 17beta-hydroxy-androst-5-en-3-one + NADH + H(+). It carries out the reaction a 3beta-hydroxysteroid + NADP(+) = a 3-oxosteroid + NADPH + H(+). The catalysed reaction is 5alpha-androstane-3beta,17beta-diol + NADP(+) = 17beta-hydroxy-5alpha-androstan-3-one + NADPH + H(+). It catalyses the reaction 3beta-hydroxy-5alpha-androstan-17-one + NADP(+) = 5alpha-androstan-3,17-dione + NADPH + H(+). The enzyme catalyses a 3-oxo-Delta(5)-steroid = a 3-oxo-Delta(4)-steroid. It carries out the reaction pregn-5-ene-3,20-dione = progesterone. The catalysed reaction is androst-5-ene-3,17-dione = androst-4-ene-3,17-dione. It catalyses the reaction 17beta-hydroxy-androst-5-en-3-one = testosterone. The enzyme catalyses 5alpha-androstane-3beta,17beta-diol + NAD(+) = 17beta-hydroxy-5alpha-androstan-3-one + NADH + H(+). Its pathway is steroid hormone biosynthesis. It functions in the pathway steroid metabolism. In terms of biological role, a bifunctional enzyme responsible for the oxidation and isomerization of 3beta-hydroxy-Delta(5)-steroid precursors to 3-oxo-Delta(4)-steroids, an essential step in steroid hormone biosynthesis. Specifically catalyzes the conversion of pregnenolone to progesterone, 17alpha-hydroxypregnenolone to 17alpha-hydroxyprogesterone, dehydroepiandrosterone (DHEA) to 4-androstenedione and androstenediol to testosterone. Additionally, catalyzes the interconversion between 3beta-hydroxy and 3-oxo-5alpha-androstane steroids controlling the bioavalability of the active forms. Specifically converts dihydrotestosterone to its inactive form 5alpha-androstanediol, that does not bind androgen receptor/AR. Also converts androstanedione, a precursor of testosterone and estrone, to epiandrosterone. Expected to use NAD(+) as preferred electron donor for the 3beta-hydroxy-steroid dehydrogenase activity and NADPH for the 3-ketosteroid reductase activity. This Macaca mulatta (Rhesus macaque) protein is 3 beta-hydroxysteroid dehydrogenase/Delta 5--&gt;4-isomerase type 1 (HSD3B1).